Reading from the N-terminus, the 215-residue chain is Putative glycosyltransferase ALG1L2 (215 aa).

The tract at residues 40 to 66 (PFRARSEPEDPDTERSAFTERDSGSGL) is disordered. The segment covering 43–62 (ARSEPEDPDTERSAFTERDS) has biased composition (basic and acidic residues).

This sequence belongs to the glycosyltransferase group 1 family.

Putative glycosyltransferase. The sequence is that of Putative glycosyltransferase ALG1L2 (ALG1L2) from Homo sapiens (Human).